A 299-amino-acid polypeptide reads, in one-letter code: Oxaloacetate decarboxylase (299 aa).

S57 provides a ligand contact to substrate. D95 is a Mg(2+) binding site. R167 and H243 together coordinate substrate.

It belongs to the isocitrate lyase/PEP mutase superfamily. Oxaloacetate decarboxylase family. Homotetramer; dimer of dimers. The cofactor is Mg(2+).

It carries out the reaction oxaloacetate + H(+) = pyruvate + CO2. Catalyzes the decarboxylation of oxaloacetate into pyruvate. Seems to play a role in maintaining cellular concentrations of bicarbonate and pyruvate. This is Oxaloacetate decarboxylase from Paraburkholderia xenovorans (strain LB400).